The chain runs to 154 residues: SsrA-binding protein (154 aa).

This sequence belongs to the SmpB family.

It localises to the cytoplasm. In terms of biological role, required for rescue of stalled ribosomes mediated by trans-translation. Binds to transfer-messenger RNA (tmRNA), required for stable association of tmRNA with ribosomes. tmRNA and SmpB together mimic tRNA shape, replacing the anticodon stem-loop with SmpB. tmRNA is encoded by the ssrA gene; the 2 termini fold to resemble tRNA(Ala) and it encodes a 'tag peptide', a short internal open reading frame. During trans-translation Ala-aminoacylated tmRNA acts like a tRNA, entering the A-site of stalled ribosomes, displacing the stalled mRNA. The ribosome then switches to translate the ORF on the tmRNA; the nascent peptide is terminated with the 'tag peptide' encoded by the tmRNA and targeted for degradation. The ribosome is freed to recommence translation, which seems to be the essential function of trans-translation. This Staphylococcus aureus (strain USA300) protein is SsrA-binding protein.